The chain runs to 144 residues: RNA-binding protein 1 (144 aa).

One can recognise an RRM domain in the interval 11–84 (CKVYVGNLGS…TRIRVEMSSG (74 aa)). Positions 78-115 (RVEMSSGRSRDRRRGEGGSSGRSGSGRYRITPSARTTS) are disordered.

The protein belongs to the splicing factor SR family. Interacts with x16 (via Arg/Ser-rich region). In terms of processing, extensively phosphorylated on serine residues in the RS domain. The tandem heptapeptide repeats in the C-terminal domain (CTD) can be highly phosphorylated. The phosphorylation activates Pol II. Phosphorylation occurs at residues 'Ser-2', 'Ser-5' and 'Ser-7' of the heptapeptide repeat and is mediated by P-TEFb. Dephosphorylated by the INTAC complex when transcripts are unfavorably configured for transcriptional elongation, leading to premature transcription termination: dephosphorylation is mediated by the mts/PP2A component of the INTAC complex. As to expression, ubiquitous.

It is found in the nucleus. In terms of biological role, contributes to the activation of female-specific DSX splicing in vivo by recognizing the RBP1 target sequences within the purine-rich polypyrimidine tract of the female-specific 3' splice site. This is RNA-binding protein 1 (Rbp1) from Drosophila melanogaster (Fruit fly).